The following is a 378-amino-acid chain: Phosphoserine aminotransferase (378 aa).

Arg53 is an L-glutamate binding site. Residues Trp117, Thr167, Asp190, and Gln213 each contribute to the pyridoxal 5'-phosphate site. The residue at position 214 (Lys214) is an N6-(pyridoxal phosphate)lysine. 255 to 256 (NT) lines the pyridoxal 5'-phosphate pocket.

The protein belongs to the class-V pyridoxal-phosphate-dependent aminotransferase family. SerC subfamily. Homodimer. Pyridoxal 5'-phosphate is required as a cofactor.

Its subcellular location is the cytoplasm. The catalysed reaction is O-phospho-L-serine + 2-oxoglutarate = 3-phosphooxypyruvate + L-glutamate. It catalyses the reaction 4-(phosphooxy)-L-threonine + 2-oxoglutarate = (R)-3-hydroxy-2-oxo-4-phosphooxybutanoate + L-glutamate. Its pathway is amino-acid biosynthesis; L-serine biosynthesis; L-serine from 3-phospho-D-glycerate: step 2/3. The protein operates within cofactor biosynthesis; pyridoxine 5'-phosphate biosynthesis; pyridoxine 5'-phosphate from D-erythrose 4-phosphate: step 3/5. In terms of biological role, catalyzes the reversible conversion of 3-phosphohydroxypyruvate to phosphoserine and of 3-hydroxy-2-oxo-4-phosphonooxybutanoate to phosphohydroxythreonine. The protein is Phosphoserine aminotransferase of Ralstonia nicotianae (strain ATCC BAA-1114 / GMI1000) (Ralstonia solanacearum).